Here is a 408-residue protein sequence, read N- to C-terminus: Phosphoglycerate kinase (408 aa).

Substrate contacts are provided by residues 24–26 (DLN), Arg39, 62–65 (HLGR), Arg121, and Arg161. Residues Lys211, Gly307, Glu338, and 364–367 (GGDS) each bind ATP.

This sequence belongs to the phosphoglycerate kinase family. In terms of assembly, monomer.

It is found in the cytoplasm. The catalysed reaction is (2R)-3-phosphoglycerate + ATP = (2R)-3-phospho-glyceroyl phosphate + ADP. It functions in the pathway carbohydrate degradation; glycolysis; pyruvate from D-glyceraldehyde 3-phosphate: step 2/5. The chain is Phosphoglycerate kinase from Arthrobacter sp. (strain FB24).